The sequence spans 163 residues: Nucleotide-binding protein MUL_0671 (163 aa).

Belongs to the YajQ family.

In terms of biological role, nucleotide-binding protein. The sequence is that of Nucleotide-binding protein MUL_0671 from Mycobacterium ulcerans (strain Agy99).